The sequence spans 338 residues: Lipoyl synthase (338 aa).

The interval Met1–Lys24 is disordered. [4Fe-4S] cluster is bound by residues Cys84, Cys89, Cys95, Cys110, Cys114, Cys117, and Ser324. One can recognise a Radical SAM core domain in the interval Phe96–Lys313.

This sequence belongs to the radical SAM superfamily. Lipoyl synthase family. [4Fe-4S] cluster is required as a cofactor.

Its subcellular location is the cytoplasm. It carries out the reaction [[Fe-S] cluster scaffold protein carrying a second [4Fe-4S](2+) cluster] + N(6)-octanoyl-L-lysyl-[protein] + 2 oxidized [2Fe-2S]-[ferredoxin] + 2 S-adenosyl-L-methionine + 4 H(+) = [[Fe-S] cluster scaffold protein] + N(6)-[(R)-dihydrolipoyl]-L-lysyl-[protein] + 4 Fe(3+) + 2 hydrogen sulfide + 2 5'-deoxyadenosine + 2 L-methionine + 2 reduced [2Fe-2S]-[ferredoxin]. The protein operates within protein modification; protein lipoylation via endogenous pathway; protein N(6)-(lipoyl)lysine from octanoyl-[acyl-carrier-protein]: step 2/2. In terms of biological role, catalyzes the radical-mediated insertion of two sulfur atoms into the C-6 and C-8 positions of the octanoyl moiety bound to the lipoyl domains of lipoate-dependent enzymes, thereby converting the octanoylated domains into lipoylated derivatives. The chain is Lipoyl synthase from Pseudomonas putida (strain W619).